A 470-amino-acid chain; its full sequence is Maturase K (470 aa).

The protein belongs to the intron maturase 2 family. MatK subfamily.

The protein localises to the plastid. The protein resides in the chloroplast. Usually encoded in the trnK tRNA gene intron. Probably assists in splicing its own and other chloroplast group II introns. This is Maturase K from Nypa fruticans (Nypa palm).